Here is a 699-residue protein sequence, read N- to C-terminus: Polyribonucleotide nucleotidyltransferase (699 aa).

Residues D485 and D491 each coordinate Mg(2+). The KH domain occupies 552–611; that stretch reads PRITTIKINPEKIRDVIGKGGAVIRALTEETGTTIELEDDGTVRIASSNGEATKEAIRRI. One can recognise an S1 motif domain in the interval 621-689; it reads GRIYNGKVIR…RQGRVRLSIK (69 aa).

It belongs to the polyribonucleotide nucleotidyltransferase family. As to quaternary structure, component of the RNA degradosome, which is a multiprotein complex involved in RNA processing and mRNA degradation. Mg(2+) serves as cofactor.

It localises to the cytoplasm. The enzyme catalyses RNA(n+1) + phosphate = RNA(n) + a ribonucleoside 5'-diphosphate. Functionally, involved in mRNA degradation. Catalyzes the phosphorolysis of single-stranded polyribonucleotides processively in the 3'- to 5'-direction. The sequence is that of Polyribonucleotide nucleotidyltransferase from Shewanella sp. (strain W3-18-1).